The primary structure comprises 23 residues: SENTGAIGKVFPRGNHWAVGHLM.

Residue Met-23 is modified to Methionine amide.

It belongs to the bombesin/neuromedin-B/ranatensin family.

It localises to the secreted. The protein resides in the cytoplasmic vesicle. Its subcellular location is the secretory vesicle lumen. Its function is as follows. Stimulates the release of gastrin and other gastrointestinal hormones. This chain is Gastrin-releasing peptide (grp), found in Oncorhynchus mykiss (Rainbow trout).